Consider the following 376-residue polypeptide: Queuine tRNA-ribosyltransferase accessory subunit 2 (376 aa).

Zn(2+) contacts are provided by cysteine 323, cysteine 325, cysteine 328, and histidine 354.

This sequence belongs to the queuine tRNA-ribosyltransferase family. QTRT2 subfamily. As to quaternary structure, heterodimer of a catalytic subunit and an accessory subunit. The cofactor is Zn(2+).

The protein localises to the cytoplasm. In terms of biological role, non-catalytic subunit of the queuine tRNA-ribosyltransferase (TGT) that catalyzes the base-exchange of a guanine (G) residue with queuine (Q) at position 34 (anticodon wobble position) in tRNAs with GU(N) anticodons (tRNA-Asp, -Asn, -His and -Tyr), resulting in the hypermodified nucleoside queuosine (7-(((4,5-cis-dihydroxy-2-cyclopenten-1-yl)amino)methyl)-7-deazaguanosine). This is Queuine tRNA-ribosyltransferase accessory subunit 2 from Caenorhabditis briggsae.